We begin with the raw amino-acid sequence, 238 residues long: Thymidine kinase, cytosolic (238 aa).

Residue serine 2 is modified to N-acetylserine. Serine 2 and serine 13 each carry phosphoserine. ATP-binding positions include 26-33, 58-60, and 97-100; these read GPMFSGKS, DTR, and DEGQ. Glutamate 98 serves as the catalytic Proton acceptor. Phenylalanine 128 is a binding site for substrate. Positions 153 and 156 each coordinate Zn(2+). Residues 172–176 and tyrosine 181 each bind substrate; that span reads VEVIG. The Zn(2+) site is built by cysteine 185 and cysteine 188. A KEN box motif is present at residues 206–208; sequence KEN. Serine 235 carries the post-translational modification Phosphoserine.

This sequence belongs to the thymidine kinase family. As to quaternary structure, homotetramer. Tetramerization from dimerization is induced by ATP and increases catalytic efficiency due to a high affinity for thymidine. Tetramerization is inhibited by phosphorylation at Ser-13. Interacts (via the KEN box) with FZR1. Post-translationally, phosphorylated on Ser-13 in mitosis. Phosphorylation of Ser-13 by CDK1 during mitosis reduces homotetramerization and catalytic efficiency when DNA replication is complete and intracellular TK1 is still present at a high level. In terms of processing, polyubiquitinated. Postmitosis, ubiquitination leads to proteasomal degradation. The KEN box sequence located at the C-terminal region targets for degradation by the anaphase promoting complex (APC/C) activated and rate-limited by FZR1.

The protein resides in the cytoplasm. It carries out the reaction thymidine + ATP = dTMP + ADP + H(+). Cell-cycle-regulated enzyme of importance in nucleotide metabolism. Catalyzes the first enzymatic step in the salvage pathway converting thymidine into thymidine monophosphate. Transcriptional regulation limits expression to the S phase of the cell cycle and transient expression coincides with the oscillation in the intracellular dTTP concentration. In Bos taurus (Bovine), this protein is Thymidine kinase, cytosolic (TK1).